Here is a 111-residue protein sequence, read N- to C-terminus: MSLPRRAAHVAIRGYQLTLSGLVGRQCRHWPSCSAYTDEAIERHGLWAGGWMGLARICRCGPFGTHGIDLVPERLPEGAAWHRPWAYGRWRGVNAPATPLAEEVHDPLPGP.

Belongs to the UPF0161 family.

The protein resides in the cell inner membrane. Its function is as follows. Could be involved in insertion of integral membrane proteins into the membrane. The chain is Putative membrane protein insertion efficiency factor from Methylobacterium nodulans (strain LMG 21967 / CNCM I-2342 / ORS 2060).